Reading from the N-terminus, the 321-residue chain is Glucan 1,3-beta-glucosidase (321 aa).

Positions 1–21 (MQFLSSFVFAALALLPLSAMA) are cleaved as a signal peptide. N-linked (GlcNAc...) asparagine glycans are attached at residues N39 and N99. E141 functions as the Proton donor in the catalytic mechanism. 3 N-linked (GlcNAc...) asparagine glycosylation sites follow: N210, N213, and N237. The active-site Nucleophile is E244. N309 and N317 each carry an N-linked (GlcNAc...) asparagine glycan.

It belongs to the glycosyl hydrolase 17 family.

It localises to the secreted. Its subcellular location is the cell wall. The catalysed reaction is Successive hydrolysis of beta-D-glucose units from the non-reducing ends of (1-&gt;3)-beta-D-glucans, releasing alpha-glucose.. Glucanases possibly play a role in cell expansion during growth, in cell-cell fusion during mating, and in spore release during sporulation. This enzyme may be involved in beta-glucan degradation and also function biosynthetically as a transglycosylase. This is Glucan 1,3-beta-glucosidase (bgl2) from Schizosaccharomyces pombe (strain 972 / ATCC 24843) (Fission yeast).